We begin with the raw amino-acid sequence, 160 residues long: N-acetyltransferase Pat (160 aa).

The N-acetyltransferase domain occupies 5-148; sequence IKIRKATKED…VYGEMRLTER (144 aa). Residues L79, V81, T87, G89, G91, T92, N118, K123, and K127 each contribute to the CoA site.

The protein belongs to the acetyltransferase family. GNAT subfamily.

It carries out the reaction L-lysyl-[protein] + acetyl-CoA = N(6)-acetyl-L-lysyl-[protein] + CoA + H(+). Its function is as follows. Modulates activity of albA1, the major archaeal DNA compaction protein, by decreasing albA1's nucleic acid binding affinity through acetylation of 'Lys-16'. The chain is N-acetyltransferase Pat from Saccharolobus solfataricus (strain ATCC 35092 / DSM 1617 / JCM 11322 / P2) (Sulfolobus solfataricus).